Reading from the N-terminus, the 66-residue chain is Sodium channel neurotoxin MeuNaTxalpha-7 (66 aa).

In terms of domain architecture, LCN-type CS-alpha/beta spans 2 to 64; that stretch reads RDGYIADDKN…VPIKVSGKCN (63 aa). 4 disulfide bridges follow: Cys-12-Cys-63, Cys-16-Cys-36, Cys-22-Cys-46, and Cys-26-Cys-48. At Asn-64 the chain carries Asparagine amide.

The protein belongs to the long (4 C-C) scorpion toxin superfamily. Sodium channel inhibitor family. Alpha subfamily. As to expression, expressed by the venom gland.

Its subcellular location is the secreted. Its function is as follows. Alpha toxins bind voltage-independently at site-3 of sodium channels (Nav) and inhibit the inactivation of the activated channels, thereby blocking neuronal transmission. The protein is Sodium channel neurotoxin MeuNaTxalpha-7 of Mesobuthus eupeus (Lesser Asian scorpion).